Consider the following 368-residue polypeptide: Isopentenyl-diphosphate delta-isomerase (368 aa).

A substrate-binding site is contributed by 7 to 8 (RK). Residues T65, 66–68 (GMT), S96, and N125 contribute to the FMN site. 96 to 98 (SQR) contacts substrate. Q160 is a binding site for substrate. A Mg(2+)-binding site is contributed by E161. FMN is bound by residues K193, S218, T223, 275 to 277 (GIR), and 296 to 297 (AL).

The protein belongs to the IPP isomerase type 2 family. Homooctamer. Dimer of tetramers. FMN serves as cofactor. It depends on NADPH as a cofactor. The cofactor is Mg(2+).

It localises to the cytoplasm. The catalysed reaction is isopentenyl diphosphate = dimethylallyl diphosphate. Involved in the biosynthesis of isoprenoids. Catalyzes the 1,3-allylic rearrangement of the homoallylic substrate isopentenyl (IPP) to its allylic isomer, dimethylallyl diphosphate (DMAPP). In Saccharolobus shibatae (strain ATCC 51178 / DSM 5389 / JCM 8931 / NBRC 15437 / B12) (Sulfolobus shibatae), this protein is Isopentenyl-diphosphate delta-isomerase.